Here is a 180-residue protein sequence, read N- to C-terminus: Small ribosomal subunit protein uS4 (180 aa).

The 72-residue stretch at 103 to 174 (RRLQTIVYKK…HPERMMIEKA (72 aa)) folds into the S4 RNA-binding domain.

The protein belongs to the universal ribosomal protein uS4 family. Part of the 30S ribosomal subunit. Contacts protein S5. The interaction surface between S4 and S5 is involved in control of translational fidelity.

Functionally, one of the primary rRNA binding proteins, it binds directly to 16S rRNA where it nucleates assembly of the body of the 30S subunit. In terms of biological role, with S5 and S12 plays an important role in translational accuracy. The protein is Small ribosomal subunit protein uS4 of Pyrococcus abyssi (strain GE5 / Orsay).